Consider the following 113-residue polypeptide: Ribonuclease P protein component (113 aa).

Over residues 1 to 10 (MLPTRHRMRT) the composition is skewed to basic residues. Positions 1–23 (MLPTRHRMRTSAHFSTTVRSGAR) are disordered.

It belongs to the RnpA family. Consists of a catalytic RNA component (M1 or rnpB) and a protein subunit.

It carries out the reaction Endonucleolytic cleavage of RNA, removing 5'-extranucleotides from tRNA precursor.. RNaseP catalyzes the removal of the 5'-leader sequence from pre-tRNA to produce the mature 5'-terminus. It can also cleave other RNA substrates such as 4.5S RNA. The protein component plays an auxiliary but essential role in vivo by binding to the 5'-leader sequence and broadening the substrate specificity of the ribozyme. This Kocuria rhizophila (strain ATCC 9341 / DSM 348 / NBRC 103217 / DC2201) protein is Ribonuclease P protein component.